A 284-amino-acid chain; its full sequence is Ubiquinone biosynthesis protein COQ4, mitochondrial (284 aa).

Zn(2+) contacts are provided by His165, Asp166, His169, and Glu181.

It belongs to the COQ4 family. In terms of assembly, component of a multi-subunit COQ enzyme complex, composed of at least COQ3, COQ4, COQ5, COQ6, COQ7 and COQ9. It depends on Zn(2+) as a cofactor.

The protein localises to the mitochondrion inner membrane. The enzyme catalyses a 4-hydroxy-3-methoxy-5-(all-trans-polyprenyl)benzoate + H(+) = a 2-methoxy-6-(all-trans-polyprenyl)phenol + CO2. The protein operates within cofactor biosynthesis; ubiquinone biosynthesis. Its function is as follows. Lyase that catalyzes the C1-decarboxylation of 4-hydroxy-3-methoxy-5-(all-trans-polyprenyl)benzoic acid into 2-methoxy-6-(all-trans-polyprenyl)phenol during ubiquinone biosynthesis. The protein is Ubiquinone biosynthesis protein COQ4, mitochondrial of Blastomyces gilchristii (strain SLH14081) (Blastomyces dermatitidis).